Consider the following 698-residue polypeptide: eEF1A lysine and N-terminal methyltransferase (698 aa).

N-acetylmethionine is present on Met-1. Ser-267 carries the post-translational modification Phosphoserine. Positions 431 to 461 are disordered; it reads KDTSHRAQKKRKKDRKKQRPADTSEDFPPAP. The segment covering 436 to 448 has biased composition (basic residues); that stretch reads RAQKKRKKDRKKQ.

It belongs to the methyltransferase superfamily. As to quaternary structure, forms a tripartite complex containing GAB1, METTL13 and SPRY2. Within the complex interacts with GAB1 and SPRY2. As to expression, expressed in the inner ear (at protein level). Expression is detected in the cochlear duct, spiral limbus region, efferent and afferent nerves, and in spiral ganglion neurons (at protein level).

The protein resides in the cytoplasm. The protein localises to the nucleus. It is found in the mitochondrion. It catalyses the reaction L-lysyl-[protein] + S-adenosyl-L-methionine = N(6)-methyl-L-lysyl-[protein] + S-adenosyl-L-homocysteine + H(+). The enzyme catalyses N(6)-methyl-L-lysyl-[protein] + S-adenosyl-L-methionine = N(6),N(6)-dimethyl-L-lysyl-[protein] + S-adenosyl-L-homocysteine + H(+). It carries out the reaction N-terminal glycyl-L-lysyl-L-glutamyl-[protein] + 3 S-adenosyl-L-methionine = N-terminal N,N,N-trimethyl-glycyl-L-lysyl-L-glutamyl-[protein] + 3 S-adenosyl-L-homocysteine + 3 H(+). Its function is as follows. Dual methyltransferase that catalyzes methylation of elongation factor 1-alpha (EEF1A1 and EEF1A2) at two different positions, and is therefore involved in the regulation of mRNA translation. Via its C-terminus, methylates EEF1A1 and EEF1A2 at the N-terminal residue 'Gly-2'. Via its N-terminus dimethylates EEF1A1 and EEF1A2 at residue 'Lys-55'. Has no activity towards core histones H2A, H2B, H3 and H4. In Mus musculus (Mouse), this protein is eEF1A lysine and N-terminal methyltransferase.